The following is a 126-amino-acid chain: Large ribosomal subunit protein uL22 (126 aa).

The protein belongs to the universal ribosomal protein uL22 family. In terms of assembly, part of the 50S ribosomal subunit.

This protein binds specifically to 23S rRNA; its binding is stimulated by other ribosomal proteins, e.g. L4, L17, and L20. It is important during the early stages of 50S assembly. It makes multiple contacts with different domains of the 23S rRNA in the assembled 50S subunit and ribosome. Its function is as follows. The globular domain of the protein is located near the polypeptide exit tunnel on the outside of the subunit, while an extended beta-hairpin is found that lines the wall of the exit tunnel in the center of the 70S ribosome. In Caulobacter vibrioides (strain ATCC 19089 / CIP 103742 / CB 15) (Caulobacter crescentus), this protein is Large ribosomal subunit protein uL22.